A 394-amino-acid chain; its full sequence is Phloroisovalerophenone synthase (394 aa).

The active site involves C166.

It belongs to the thiolase-like superfamily. Chalcone/stilbene synthases family. Homodimer. In terms of tissue distribution, expressed in lupulin gland. Present at low levels in leaves but accumulates in cones.

The catalysed reaction is 3-methylbutanoyl-CoA + 3 malonyl-CoA + 3 H(+) = phlorisovalerophenone + 3 CO2 + 4 CoA. The enzyme catalyses (E)-4-coumaroyl-CoA + 3 malonyl-CoA + 3 H(+) = 2',4,4',6'-tetrahydroxychalcone + 3 CO2 + 4 CoA. It catalyses the reaction 2-methylpropanoyl-CoA + 3 malonyl-CoA + 3 H(+) = phlorisobutanophenone + 3 CO2 + 4 CoA. It participates in secondary metabolite biosynthesis. Its function is as follows. Involved in the biosynthesis of prenylated phenolics natural products which contribute to the bitter taste of beer and display broad biological activities. Polyketide synthase that can use 3-methylbutanoyl-CoA (isovaleryl-CoA) and 2-methylpropanoyl-CoA (isobutyryl-CoA) as substrates to produce phlorisovalerophenone (PIVP) and phlorisobutyrophenone (2-methyl-1-(2,4,6-trihydroxyphenyl)propan-1-one), respectively, intermediates in the biosynthesis of the bitter acids (alpha and beta) acids. Can also produce naringenin-chalcone (2',4,4',6'-tetrahydroxychalcone) from 4-coumaroyl-CoA with a lower efficiency. The protein is Phloroisovalerophenone synthase of Humulus lupulus (European hop).